Reading from the N-terminus, the 389-residue chain is Succinate--CoA ligase [ADP-forming] subunit beta (389 aa).

The 228-residue stretch at 9–236 folds into the ATP-grasp domain; that stretch reads RDLFEAHGVP…ERTEDPLEAK (228 aa). ATP is bound by residues K45, 52-54, A94, and E99; that span reads GRG. Mg(2+) is bound by residues N191 and D205. Substrate-binding positions include N256 and 318–320; that span reads GIT.

The protein belongs to the succinate/malate CoA ligase beta subunit family. In terms of assembly, heterotetramer of two alpha and two beta subunits. Requires Mg(2+) as cofactor.

The enzyme catalyses succinate + ATP + CoA = succinyl-CoA + ADP + phosphate. It carries out the reaction GTP + succinate + CoA = succinyl-CoA + GDP + phosphate. The protein operates within carbohydrate metabolism; tricarboxylic acid cycle; succinate from succinyl-CoA (ligase route): step 1/1. Its function is as follows. Succinyl-CoA synthetase functions in the citric acid cycle (TCA), coupling the hydrolysis of succinyl-CoA to the synthesis of either ATP or GTP and thus represents the only step of substrate-level phosphorylation in the TCA. The beta subunit provides nucleotide specificity of the enzyme and binds the substrate succinate, while the binding sites for coenzyme A and phosphate are found in the alpha subunit. The protein is Succinate--CoA ligase [ADP-forming] subunit beta of Micrococcus luteus (strain ATCC 4698 / DSM 20030 / JCM 1464 / CCM 169 / CCUG 5858 / IAM 1056 / NBRC 3333 / NCIMB 9278 / NCTC 2665 / VKM Ac-2230) (Micrococcus lysodeikticus).